The following is a 316-amino-acid chain: Glutathione synthetase (316 aa).

Residues 124–310 (EKLFTAWFPE…ITGKLMDAIE (187 aa)) enclose the ATP-grasp domain. 150-207 (FREEHGDVILKPLDGMGGASIFRVKENDPNVSVIIETLTNHGQNYAMAQTFVPDISNG) contributes to the ATP binding site. Positions 281 and 283 each coordinate Mg(2+).

It belongs to the prokaryotic GSH synthase family. It depends on Mg(2+) as a cofactor. Mn(2+) is required as a cofactor.

It carries out the reaction gamma-L-glutamyl-L-cysteine + glycine + ATP = glutathione + ADP + phosphate + H(+). It participates in sulfur metabolism; glutathione biosynthesis; glutathione from L-cysteine and L-glutamate: step 2/2. The polypeptide is Glutathione synthetase (Vibrio parahaemolyticus serotype O3:K6 (strain RIMD 2210633)).